The following is a 162-amino-acid chain: Type IV major fimbrial protein FimA (162 aa).

The propeptide at 1–7 (MKSLQKG) is leader sequence. F8 carries the N-methylphenylalanine modification. The chain crosses the membrane as a helical span at residues 8-28 (FTLIELMIVVAIIGILAAFAI). A disulfide bridge links C63 with C106.

This sequence belongs to the N-Me-Phe pilin family.

It is found in the fimbrium. The protein resides in the membrane. Functionally, major component of the type IV fimbriae that plays an essential role in twitching motility, natural transformation, and protease secretion. This chain is Type IV major fimbrial protein FimA (fimA), found in Dichelobacter nodosus (strain VCS1703A).